The sequence spans 360 residues: tRNA-specific 2-thiouridylase MnmA (360 aa).

Residues 8-15 (GMSGGVDS) and M34 each bind ATP. Positions 94–96 (NPD) are interaction with target base in tRNA. C99 acts as the Nucleophile in catalysis. A disulfide bridge links C99 with C195. Position 123 (G123) interacts with ATP. Residues 145–147 (KDQ) are interaction with tRNA. Residue C195 is the Cysteine persulfide intermediate of the active site. Residues 307 to 308 (RY) are interaction with tRNA.

It belongs to the MnmA/TRMU family.

The protein resides in the cytoplasm. It carries out the reaction S-sulfanyl-L-cysteinyl-[protein] + uridine(34) in tRNA + AH2 + ATP = 2-thiouridine(34) in tRNA + L-cysteinyl-[protein] + A + AMP + diphosphate + H(+). In terms of biological role, catalyzes the 2-thiolation of uridine at the wobble position (U34) of tRNA, leading to the formation of s(2)U34. The sequence is that of tRNA-specific 2-thiouridylase MnmA from Methylobacillus flagellatus (strain ATCC 51484 / DSM 6875 / VKM B-1610 / KT).